The primary structure comprises 170 residues: MESHLNEQQISDFRDAFSLFDKNNDGCISREELATVLTRLGMAPSQEDLQDMIVAVDEDGNGTIEFDEFLAIMKKKLYENDKGDDEEELRKAFRIFDKDDNGFISRNELSMVMASLGEEMTEDEIDDMMKAADSNNDGQVDYEEFKRVMMSTWNITEIFKPHVTIWRYKP.

EF-hand domains follow at residues 8 to 43 (QQISDFRDAFSLFDKNNDGCISREELATVLTRLGMA), 44 to 79 (PSQEDLQDMIVAVDEDGNGTIEFDEFLAIMKKKLYE), 84 to 119 (DDEEELRKAFRIFDKDDNGFISRNELSMVMASLGEE), and 120 to 155 (MTEDEIDDMMKAADSNNDGQVDYEEFKRVMMSTWNI). The Ca(2+) site is built by Asp21, Asn23, Asp25, Cys27, Glu32, Asp57, Asp59, Asn61, Thr63, Glu68, Asp97, Asp99, Asn101, Glu108, Asp133, Asn135, Asp137, Gln139, and Glu144.

The protein belongs to the calmodulin family.

Potential calcium sensor. This chain is Putative calmodulin-like protein 6 (CML6), found in Oryza sativa subsp. japonica (Rice).